A 228-amino-acid chain; its full sequence is Immunogenic protein MPB64 (228 aa).

Positions M1–A23 are cleaved as a signal peptide.

This sequence belongs to the RsiV family.

It is found in the secreted. This Mycobacterium bovis (strain ATCC BAA-935 / AF2122/97) protein is Immunogenic protein MPB64 (mpb64).